Consider the following 113-residue polypeptide: U11-theraphotoxin-Hhn1k (113 aa).

Positions 1–21 are cleaved as a signal peptide; that stretch reads MNTVRVTFLLVFVLAVSLGQA. A propeptide spanning residues 22-74 is cleaved from the precursor; sequence DKDENRMEMQEKTEQGKSYLDFAENLLLQKLEELEAKLLEEDSEESRNSRQKR. The segment at 61-83 is disordered; sequence EEDSEESRNSRQKRCIGEGVPCD. 3 disulfide bridges follow: Cys75–Cys90, Cys82–Cys95, and Cys89–Cys110.

Belongs to the neurotoxin 14 (magi-1) family. 01 (HNTX-16) subfamily. As to expression, expressed by the venom gland.

Its subcellular location is the secreted. In terms of biological role, probable ion channel inhibitor. In Cyriopagopus hainanus (Chinese bird spider), this protein is U11-theraphotoxin-Hhn1k.